The chain runs to 182 residues: Dirigent protein 5 (182 aa).

The first 23 residues, 1–23 (MVGQMKSFLFLFVFLVLTKTVIS), serve as a signal peptide directing secretion. A disulfide bridge links cysteine 35 with cysteine 181. 2 N-linked (GlcNAc...) asparagine glycosylation sites follow: asparagine 54 and asparagine 118.

This sequence belongs to the plant dirigent protein family. In terms of assembly, homodimer. Confined to shoot meristem, vascular region of cotyledons and siliques abscission zone.

The protein localises to the secreted. It localises to the extracellular space. It is found in the apoplast. Its function is as follows. Dirigent proteins impart stereoselectivity on the phenoxy radical-coupling reaction, yielding optically active lignans from two molecules of coniferyl alcohol in the biosynthesis of lignans, flavonolignans, and alkaloids and thus plays a central role in plant secondary metabolism. Enantiocomplementary dirigent protein that mediates the laccase-catalyzed enantioselective oxidative phenol coupling of (E)-coniferyl alcohol to (-)-pinoresinol. In Arabidopsis thaliana (Mouse-ear cress), this protein is Dirigent protein 5 (DIR5).